A 432-amino-acid chain; its full sequence is MSKIVKVLGREIIDSRGNPTVEAEVHLESGFVGMAAAPSGASTGSREALELRDGDKARFLGKGVLKAVAAVNGPIAEALVGKDAKNQAEIDQIMIDLDGTDNKANFGANAILAVSLANAKAAAAAKSMPLYAHIAELNGTPGVFSMPLPMMNIINGGEHADNNVDIQEFMIQPVGAKTLKEGLRIGAEVFHNLAKVLKSKGYSTAVGDEGGFAPNLKSNAEALEVIAEAVAAAGYELGKDVTLAMDCAASEFFDKEAGIYNMKGEGKTFTSEEFNHYLAELANQFPIVSIEDGLDESDWTGFKHQTELLGDKLQLVGDDLFVTNTKILAEGIEKGVANSILIKFNQIGSLTETLAAIKMAKDAGYTAVISHRSGETEDATIADLAVGTAAGQIKTGSMSRSDRVAKYNQLIRIEEALGEKAPFNGLKEVKGQ.

A (2R)-2-phosphoglycerate-binding site is contributed by Gln167. Glu209 functions as the Proton donor in the catalytic mechanism. Residues Asp246, Glu291, and Asp318 each coordinate Mg(2+). (2R)-2-phosphoglycerate-binding residues include Lys343, Arg372, Ser373, and Lys394. Residue Lys343 is the Proton acceptor of the active site.

This sequence belongs to the enolase family. In terms of assembly, component of the RNA degradosome, a multiprotein complex involved in RNA processing and mRNA degradation. The cofactor is Mg(2+).

The protein resides in the cytoplasm. It is found in the secreted. It localises to the cell surface. It carries out the reaction (2R)-2-phosphoglycerate = phosphoenolpyruvate + H2O. It functions in the pathway carbohydrate degradation; glycolysis; pyruvate from D-glyceraldehyde 3-phosphate: step 4/5. In terms of biological role, catalyzes the reversible conversion of 2-phosphoglycerate (2-PG) into phosphoenolpyruvate (PEP). It is essential for the degradation of carbohydrates via glycolysis. This chain is Enolase, found in Aliivibrio fischeri (strain ATCC 700601 / ES114) (Vibrio fischeri).